The chain runs to 295 residues: MFLLQGAQMLQMLEKSLRKSLPMSLKVYGTVMHMNHGNPFNLKALVDKWPDFQTVVIRPQEQDMKDDLDHYTNTYHVYSEDLKNCQEFLDLPEVINWKQHLQIQSTQSSLNEVIQNLAATKSFKVKRSKNILYMASETIKELTPSLLDVKNLPVGDGKPKAIDPEMFKLSSVDPSHAAVVNRFWLFGGNERSLRFIERCIQSFPNFCLLGTEGTPVSWSLMDQTGEMRMAGTLPEYRAQGLVTHAIYQQAQCLLKRGFPVYSHVDPKNQIMQKMSQSLNHVPMPSDWNQWNCEPL.

N6-acetyllysine; alternate is present on residues lysine 15, lysine 126, and lysine 140. N6-succinyllysine; alternate occurs at positions 15, 126, and 140. Lysine 158 bears the N6-acetyllysine mark. Position 168 is an N6-succinyllysine (lysine 168). An N6-acetyllysine; alternate modification is found at lysine 255. Lysine 255 is modified (N6-succinyllysine; alternate).

It belongs to the glycine N-acyltransferase family. Detected in liver (at protein level).

It is found in the mitochondrion. The catalysed reaction is an acyl-CoA + glycine = an N-acylglycine + CoA + H(+). The enzyme catalyses benzoyl-CoA + glycine = N-benzoylglycine + CoA + H(+). In terms of biological role, mitochondrial acyltransferase which transfers an acyl group to the N-terminus of glycine and glutamine, although much less efficiently. Can conjugate a multitude of substrates to form a variety of N-acylglycines, thereby detoxify xenobiotics, such as benzoic acid or salicylic acid, and endogenous organic acids, such as isovaleric acid. This chain is Glycine N-acyltransferase (GLYAT), found in Bos taurus (Bovine).